A 450-amino-acid polypeptide reads, in one-letter code: tRNA modification GTPase MnmE (450 aa).

(6S)-5-formyl-5,6,7,8-tetrahydrofolate is bound by residues arginine 25, glutamate 83, and lysine 122. The TrmE-type G domain occupies 218 to 377 (GFKVAIIGKP…QMEALLDSIG (160 aa)). Asparagine 228 lines the K(+) pocket. GTP contacts are provided by residues 228–233 (NVGKSS), 247–253 (SDIAGTT), and 272–275 (DTAG). Mg(2+) is bound at residue serine 232. K(+) is bound by residues serine 247, isoleucine 249, and threonine 252. Residue threonine 253 coordinates Mg(2+). (6S)-5-formyl-5,6,7,8-tetrahydrofolate is bound at residue lysine 450.

This sequence belongs to the TRAFAC class TrmE-Era-EngA-EngB-Septin-like GTPase superfamily. TrmE GTPase family. As to quaternary structure, homodimer. Heterotetramer of two MnmE and two MnmG subunits. K(+) serves as cofactor.

The protein resides in the cytoplasm. In terms of biological role, exhibits a very high intrinsic GTPase hydrolysis rate. Involved in the addition of a carboxymethylaminomethyl (cmnm) group at the wobble position (U34) of certain tRNAs, forming tRNA-cmnm(5)s(2)U34. This is tRNA modification GTPase MnmE from Sulfurovum sp. (strain NBC37-1).